The sequence spans 610 residues: Elongation factor 4 (610 aa).

The tr-type G domain maps to 7–189 (SRIRNFSIIA…AIVQRIPPPK (183 aa)). Residues 19–24 (DHGKST) and 136–139 (NKID) contribute to the GTP site.

It belongs to the TRAFAC class translation factor GTPase superfamily. Classic translation factor GTPase family. LepA subfamily.

The protein localises to the cell inner membrane. The enzyme catalyses GTP + H2O = GDP + phosphate + H(+). Its function is as follows. Required for accurate and efficient protein synthesis under certain stress conditions. May act as a fidelity factor of the translation reaction, by catalyzing a one-codon backward translocation of tRNAs on improperly translocated ribosomes. Back-translocation proceeds from a post-translocation (POST) complex to a pre-translocation (PRE) complex, thus giving elongation factor G a second chance to translocate the tRNAs correctly. Binds to ribosomes in a GTP-dependent manner. The polypeptide is Elongation factor 4 (Thermus thermophilus (strain ATCC 27634 / DSM 579 / HB8)).